We begin with the raw amino-acid sequence, 359 residues long: Peptide chain release factor 1 (359 aa).

An N5-methylglutamine modification is found at Gln-236.

It belongs to the prokaryotic/mitochondrial release factor family. Post-translationally, methylated by PrmC. Methylation increases the termination efficiency of RF1.

It localises to the cytoplasm. Its function is as follows. Peptide chain release factor 1 directs the termination of translation in response to the peptide chain termination codons UAG and UAA. This Streptococcus pneumoniae (strain Taiwan19F-14) protein is Peptide chain release factor 1.